The following is a 333-amino-acid chain: Geminin coiled-coil domain-containing protein 1 (333 aa).

A coiled-coil region spans residues 83–118; that stretch reads QLYRNKQLQDTLLQKEEELARLHEENNHLRQYLNST. The segment covering 145–154 has biased composition (basic residues); that stretch reads KEKRKPKEHR. Residues 145-165 form a disordered region; the sequence is KEKRKPKEHRHSPAEIPQFKT.

This sequence belongs to the GEMC1 family. Highly phosphorylated by CDK2; stimulates initiation of DNA replication.

It localises to the nucleus. Its function is as follows. Regulator of DNA replication. Promotes initiation of chromosomal DNA replication by mediating TOPBP1- and CDK2-dependent recruitment of CDC45L onto replication origins. The sequence is that of Geminin coiled-coil domain-containing protein 1 (Gmnc) from Mus musculus (Mouse).